A 278-amino-acid polypeptide reads, in one-letter code: Prohibitin-7, mitochondrial (278 aa).

The Mitochondrial matrix segment spans residues 1–14; sequence MNVKKVPNVPGSPA. A helical; Signal-anchor for type II membrane protein membrane pass occupies residues 15–37; the sequence is LSALLKLGVIGGLGLYCIGSSMY. Over 38–278 the chain is Mitochondrial intermembrane; that stretch reads NVDGGHRAIV…NSSDLLISKQ (241 aa). Positions 186–220 form a coiled coil; that stretch reads KEFTEAIEKKQVAAQEAERAKFIVEKAEQDKKSAI.

It belongs to the prohibitin family. In terms of assembly, component of a prohibitin multimeric complex in mitochondrial membranes.

The protein localises to the mitochondrion inner membrane. Prohibitin probably acts as a holdase/unfoldase for the stabilization of newly synthesized mitochondrial proteins. The sequence is that of Prohibitin-7, mitochondrial (PHB7) from Arabidopsis thaliana (Mouse-ear cress).